The following is a 718-amino-acid chain: Heat shock 70 kDa protein 6, chloroplastic (718 aa).

Residues 1–92 (MASSAAQIHV…IDLGTTNSAV (92 aa)) constitute a chloroplast transit peptide. Residues 671 to 718 (QSLYNQPGAGGPGAGPSPGGEGASSGDSSSSKGGDGDDVIDADFTDSQ) form a disordered region. Gly residues predominate over residues 678–693 (GAGGPGAGPSPGGEGA). The span at 706 to 718 (GDDVIDADFTDSQ) shows a compositional bias: acidic residues.

This sequence belongs to the heat shock protein 70 (TC 1.A.33) family. DnaK subfamily. As to quaternary structure, interacts with geminivirus movement protein (MP).

The protein resides in the plastid. The protein localises to the chloroplast stroma. Functionally, acts redundantly with HSP70-7 in the thermotolerance of germinating seeds. Plays an important role in the protein precursor import into chloroplasts. In cooperation with other chaperones, Hsp70s are key components that facilitate folding of de novo synthesized proteins, assist translocation of precursor proteins into organelles, and are responsible for degradation of damaged protein under stress conditions. This is Heat shock 70 kDa protein 6, chloroplastic (HSP70-6) from Arabidopsis thaliana (Mouse-ear cress).